Consider the following 264-residue polypeptide: Thiazole synthase (264 aa).

K106 serves as the catalytic Schiff-base intermediate with DXP. 1-deoxy-D-xylulose 5-phosphate is bound by residues G167, 193 to 194 (AG), and 215 to 216 (NT).

It belongs to the ThiG family. As to quaternary structure, homotetramer. Forms heterodimers with either ThiH or ThiS.

It localises to the cytoplasm. It catalyses the reaction [ThiS sulfur-carrier protein]-C-terminal-Gly-aminoethanethioate + 2-iminoacetate + 1-deoxy-D-xylulose 5-phosphate = [ThiS sulfur-carrier protein]-C-terminal Gly-Gly + 2-[(2R,5Z)-2-carboxy-4-methylthiazol-5(2H)-ylidene]ethyl phosphate + 2 H2O + H(+). Its pathway is cofactor biosynthesis; thiamine diphosphate biosynthesis. In terms of biological role, catalyzes the rearrangement of 1-deoxy-D-xylulose 5-phosphate (DXP) to produce the thiazole phosphate moiety of thiamine. Sulfur is provided by the thiocarboxylate moiety of the carrier protein ThiS. In vitro, sulfur can be provided by H(2)S. This Xylella fastidiosa (strain 9a5c) protein is Thiazole synthase.